A 156-amino-acid chain; its full sequence is Small ribosomal subunit protein uS7 (156 aa).

This sequence belongs to the universal ribosomal protein uS7 family. As to quaternary structure, part of the 30S ribosomal subunit. Contacts proteins S9 and S11.

Functionally, one of the primary rRNA binding proteins, it binds directly to 16S rRNA where it nucleates assembly of the head domain of the 30S subunit. Is located at the subunit interface close to the decoding center, probably blocks exit of the E-site tRNA. The protein is Small ribosomal subunit protein uS7 of Jannaschia sp. (strain CCS1).